The sequence spans 231 residues: Ion-translocating oxidoreductase complex subunit E (231 aa).

6 consecutive transmembrane segments (helical) span residues 18 to 38, 39 to 59, 63 to 83, 86 to 106, 125 to 145, and 182 to 202; these read ALVQLLGLCPLLAVTSTATNA, LGLGLATTLVLTLTNLTISTL, TPAEIRIPIYVMIIASVVSAV, LINAYAFGLYQSLGIFIPLIV, ALSALDGFSIGMGATCAMFVL, and PFLLAMLPPSAFIGLGLMLAG.

The protein belongs to the NqrDE/RnfAE family. In terms of assembly, the complex is composed of six subunits: RsxA, RsxB, RsxC, RsxD, RsxE and RsxG.

The protein localises to the cell inner membrane. In terms of biological role, part of a membrane-bound complex that couples electron transfer with translocation of ions across the membrane. Required to maintain the reduced state of SoxR. This Escherichia coli O7:K1 (strain IAI39 / ExPEC) protein is Ion-translocating oxidoreductase complex subunit E.